Here is a 122-residue protein sequence, read N- to C-terminus: Large ribosomal subunit protein uL14 (122 aa).

Belongs to the universal ribosomal protein uL14 family. As to quaternary structure, part of the 50S ribosomal subunit. Forms a cluster with proteins L3 and L19. In the 70S ribosome, L14 and L19 interact and together make contacts with the 16S rRNA in bridges B5 and B8.

Functionally, binds to 23S rRNA. Forms part of two intersubunit bridges in the 70S ribosome. The polypeptide is Large ribosomal subunit protein uL14 (Lacticaseibacillus casei (strain BL23) (Lactobacillus casei)).